The primary structure comprises 166 residues: uncharacterized protein (166 aa).

This is an uncharacterized protein from Orgyia pseudotsugata (Douglas-fir tussock moth).